The chain runs to 430 residues: Enolase (430 aa).

Residue glutamine 167 coordinates (2R)-2-phosphoglycerate. Glutamate 209 (proton donor) is an active-site residue. 3 residues coordinate Mg(2+): aspartate 246, glutamate 289, and aspartate 316. Positions 341, 370, 371, and 392 each coordinate (2R)-2-phosphoglycerate. The active-site Proton acceptor is the lysine 341.

It belongs to the enolase family. In terms of assembly, component of the RNA degradosome, a multiprotein complex involved in RNA processing and mRNA degradation. It depends on Mg(2+) as a cofactor.

It is found in the cytoplasm. Its subcellular location is the secreted. The protein localises to the cell surface. It carries out the reaction (2R)-2-phosphoglycerate = phosphoenolpyruvate + H2O. It functions in the pathway carbohydrate degradation; glycolysis; pyruvate from D-glyceraldehyde 3-phosphate: step 4/5. Functionally, catalyzes the reversible conversion of 2-phosphoglycerate (2-PG) into phosphoenolpyruvate (PEP). It is essential for the degradation of carbohydrates via glycolysis. The protein is Enolase of Idiomarina loihiensis (strain ATCC BAA-735 / DSM 15497 / L2-TR).